A 349-amino-acid chain; its full sequence is GSYADELVKTAKTIASPGRGILAMDESNATCGKRLDSIGLENTEANRQAWRTLLVTVPTLGEYISGAILFEETLYQSTVDGRKIVDVLVEQNIIPGIKVDKGLVPLAGSNNESWCQGLDGLASRSAAYYQQGARFAKWRTVVSIPNGPSALAVKEAAWGLARYAAISQDNGLVPIVEPEILLDGEHGIDRTFEVAQKVWAEVFYYLAENNVQFEGILLKPSMVTPGAESKDKASPTKVAEYTLNLLHRRIPPAVPGIMFLSGGQSEVEATLNLNAMNKSPNPWHVSFSYARALQNTALKTWGGLPENVKAAQEALLFRAKSNSLAQLGKYIGDGESEEAKKDCCQGYSY.

2 residues coordinate substrate: arginine 47 and lysine 137. Glutamate 177 (proton acceptor) is an active-site residue. Catalysis depends on lysine 219, which acts as the Schiff-base intermediate with dihydroxyacetone-P.

Belongs to the class I fructose-bisphosphate aldolase family.

It is found in the plastid. It localises to the chloroplast. The catalysed reaction is beta-D-fructose 1,6-bisphosphate = D-glyceraldehyde 3-phosphate + dihydroxyacetone phosphate. It functions in the pathway carbohydrate degradation; glycolysis; D-glyceraldehyde 3-phosphate and glycerone phosphate from D-glucose: step 4/4. This Pisum sativum (Garden pea) protein is Fructose-bisphosphate aldolase 2, chloroplastic.